The sequence spans 1389 residues: DNA-directed RNA polymerase subunit beta'' (1389 aa).

The Zn(2+) site is built by C220, C290, C297, and C300.

This sequence belongs to the RNA polymerase beta' chain family. RpoC2 subfamily. In plastids the minimal PEP RNA polymerase catalytic core is composed of four subunits: alpha, beta, beta', and beta''. When a (nuclear-encoded) sigma factor is associated with the core the holoenzyme is formed, which can initiate transcription. Zn(2+) serves as cofactor.

It localises to the plastid. The protein localises to the chloroplast. It carries out the reaction RNA(n) + a ribonucleoside 5'-triphosphate = RNA(n+1) + diphosphate. DNA-dependent RNA polymerase catalyzes the transcription of DNA into RNA using the four ribonucleoside triphosphates as substrates. The chain is DNA-directed RNA polymerase subunit beta'' from Chloranthus spicatus (Chulantree).